The chain runs to 272 residues: N-acetylmuramoyl-L-alanine amidase CwlA (272 aa).

Positions 24–142 constitute an N-acetylmuramoyl-L-alanine amidase domain; sequence KAEYITIHNT…QDWNGKYCPH (119 aa).

Belongs to the N-acetylmuramoyl-L-alanine amidase 2 family.

It catalyses the reaction Hydrolyzes the link between N-acetylmuramoyl residues and L-amino acid residues in certain cell-wall glycopeptides.. Autolysins are involved in some important biological processes such as cell separation, cell-wall turnover, competence for genetic transformation, formation of the flagella and sporulation. The polypeptide is N-acetylmuramoyl-L-alanine amidase CwlA (cwlA) (Bacillus subtilis (strain 168)).